The primary structure comprises 107 residues: Cell cycle protein GpsB (107 aa).

Residues 32–65 (LDNVIQDYETYISEIEELKAEIERLKNQNTHPKS) adopt a coiled-coil conformation. A disordered region spans residues 57 to 80 (KNQNTHPKSPSTENRHAMVQPTRV). Over residues 58–68 (NQNTHPKSPST) the composition is skewed to polar residues.

This sequence belongs to the GpsB family. In terms of assembly, forms polymers through the coiled coil domains. Interacts with PBP1, MreC and EzrA.

It is found in the cytoplasm. Its function is as follows. Divisome component that associates with the complex late in its assembly, after the Z-ring is formed, and is dependent on DivIC and PBP2B for its recruitment to the divisome. Together with EzrA, is a key component of the system that regulates PBP1 localization during cell cycle progression. Its main role could be the removal of PBP1 from the cell pole after pole maturation is completed. Also contributes to the recruitment of PBP1 to the division complex. Not essential for septum formation. This Streptococcus uberis (strain ATCC BAA-854 / 0140J) protein is Cell cycle protein GpsB.